The primary structure comprises 416 residues: Na(+)/H(+) antiporter NhaA (416 aa).

11 helical membrane-spanning segments follow: residues 39–59 (GIVL…PWAA), 82–102 (LHFW…GLEI), 119–139 (LPVL…LALV), 146–166 (GWAV…ALLG), 175–195 (VFLL…IALF), 198–218 (GGLQ…VLLL), 234–254 (AVLW…GVVL), 281–301 (PWVT…VALG), 315–335 (LLMA…VLLA), 353–373 (WGGL…AIFI), and 390–410 (GVLL…WWLQ).

This sequence belongs to the NhaA Na(+)/H(+) (TC 2.A.33) antiporter family.

Its subcellular location is the cell inner membrane. The catalysed reaction is Na(+)(in) + 2 H(+)(out) = Na(+)(out) + 2 H(+)(in). Functionally, na(+)/H(+) antiporter that extrudes sodium in exchange for external protons. This chain is Na(+)/H(+) antiporter NhaA, found in Acidovorax sp. (strain JS42).